Consider the following 421-residue polypeptide: Imidazolonepropionase (421 aa).

2 residues coordinate Fe(3+): His-81 and His-83. Zn(2+) contacts are provided by His-81 and His-83. Arg-90, Tyr-153, and His-186 together coordinate 4-imidazolone-5-propanoate. An N-formimidoyl-L-glutamate-binding site is contributed by Tyr-153. His-251 lines the Fe(3+) pocket. Residue His-251 coordinates Zn(2+). A 4-imidazolone-5-propanoate-binding site is contributed by Glu-254. Asp-326 contacts Fe(3+). Zn(2+) is bound at residue Asp-326. Positions 328 and 330 each coordinate N-formimidoyl-L-glutamate. Ser-331 is a binding site for 4-imidazolone-5-propanoate.

It belongs to the metallo-dependent hydrolases superfamily. HutI family. The cofactor is Zn(2+). Requires Fe(3+) as cofactor.

Its subcellular location is the cytoplasm. It catalyses the reaction 4-imidazolone-5-propanoate + H2O = N-formimidoyl-L-glutamate. The protein operates within amino-acid degradation; L-histidine degradation into L-glutamate; N-formimidoyl-L-glutamate from L-histidine: step 3/3. In terms of biological role, catalyzes the hydrolytic cleavage of the carbon-nitrogen bond in imidazolone-5-propanoate to yield N-formimidoyl-L-glutamate. It is the third step in the universal histidine degradation pathway. The polypeptide is Imidazolonepropionase (Streptococcus pyogenes serotype M18 (strain MGAS8232)).